A 220-amino-acid polypeptide reads, in one-letter code: Ras-related protein Rab-11B (220 aa).

Residue 18 to 25 coordinates GTP; it reads GDSGVGKS. The Effector region motif lies at 40 to 48; that stretch reads KLSTIGVEF. Residues 66-70 and 124-127 each bind GTP; these read DTAGQ and NKSD. 2 S-geranylgeranyl cysteine lipidation sites follow: Cys219 and Cys220.

The protein belongs to the small GTPase superfamily. Rab family.

It localises to the cell membrane. The protein is Ras-related protein Rab-11B (rab11B) of Dictyostelium discoideum (Social amoeba).